Consider the following 55-residue polypeptide: Large ribosomal subunit protein bL33 (55 aa).

It belongs to the bacterial ribosomal protein bL33 family.

This Gluconacetobacter diazotrophicus (strain ATCC 49037 / DSM 5601 / CCUG 37298 / CIP 103539 / LMG 7603 / PAl5) protein is Large ribosomal subunit protein bL33.